The primary structure comprises 216 residues: Large ribosomal subunit protein uL3 (216 aa).

Gln157 is modified (N5-methylglutamine).

The protein belongs to the universal ribosomal protein uL3 family. Part of the 50S ribosomal subunit. Forms a cluster with proteins L14 and L19. Methylated by PrmB.

Functionally, one of the primary rRNA binding proteins, it binds directly near the 3'-end of the 23S rRNA, where it nucleates assembly of the 50S subunit. This Xanthomonas axonopodis pv. citri (strain 306) protein is Large ribosomal subunit protein uL3.